The primary structure comprises 366 residues: Alanine racemase (366 aa).

The active-site Proton acceptor; specific for D-alanine is the K40. K40 carries the post-translational modification N6-(pyridoxal phosphate)lysine. Residue R136 participates in substrate binding. Catalysis depends on Y263, which acts as the Proton acceptor; specific for L-alanine. A substrate-binding site is contributed by M310.

This sequence belongs to the alanine racemase family. Requires pyridoxal 5'-phosphate as cofactor.

It carries out the reaction L-alanine = D-alanine. It participates in amino-acid biosynthesis; D-alanine biosynthesis; D-alanine from L-alanine: step 1/1. Functionally, catalyzes the interconversion of L-alanine and D-alanine. May also act on other amino acids. This chain is Alanine racemase (alr), found in Streptococcus pyogenes serotype M2 (strain MGAS10270).